The primary structure comprises 366 residues: Ribosomal RNA large subunit methyltransferase M (366 aa).

Residues S188, 221 to 224 (CPGG), D240, D260, and D277 contribute to the S-adenosyl-L-methionine site. The active-site Proton acceptor is the K306.

It belongs to the class I-like SAM-binding methyltransferase superfamily. RNA methyltransferase RlmE family. RlmM subfamily. Monomer.

It localises to the cytoplasm. It catalyses the reaction cytidine(2498) in 23S rRNA + S-adenosyl-L-methionine = 2'-O-methylcytidine(2498) in 23S rRNA + S-adenosyl-L-homocysteine + H(+). Catalyzes the 2'-O-methylation at nucleotide C2498 in 23S rRNA. The protein is Ribosomal RNA large subunit methyltransferase M of Salmonella gallinarum (strain 287/91 / NCTC 13346).